A 104-amino-acid chain; its full sequence is MGKESGWDSGRAAVAAVVGGVVAVGTVLVALSAMGFTSVGIAASSIAAKMMSTAAIANGGGVAAGSLVAILQSVGAAGLSVTSKVIGGFAGTALGAWLGSPPSS.

A run of 3 helical transmembrane segments spans residues 14–34, 59–79, and 81–101; these read VAAVVGGVVAVGTVLVALSAM, GGGVAAGSLVAILQSVGAAGL, and VTSKVIGGFAGTALGAWLGSP.

This sequence belongs to the IFI6/IFI27 family.

The protein resides in the membrane. Its function is as follows. Plays a role in the apoptotic process and has a pro-apoptotic activity. This chain is Interferon alpha-inducible protein 27-like protein 1, found in Homo sapiens (Human).